The chain runs to 417 residues: Serine hydroxymethyltransferase (417 aa).

(6S)-5,6,7,8-tetrahydrofolate is bound by residues leucine 121 and 125-127 (GHL). An N6-(pyridoxal phosphate)lysine modification is found at lysine 229. 355–357 (SPF) contributes to the (6S)-5,6,7,8-tetrahydrofolate binding site.

It belongs to the SHMT family. In terms of assembly, homodimer. Pyridoxal 5'-phosphate serves as cofactor.

It localises to the cytoplasm. The enzyme catalyses (6R)-5,10-methylene-5,6,7,8-tetrahydrofolate + glycine + H2O = (6S)-5,6,7,8-tetrahydrofolate + L-serine. It participates in one-carbon metabolism; tetrahydrofolate interconversion. Its pathway is amino-acid biosynthesis; glycine biosynthesis; glycine from L-serine: step 1/1. Its function is as follows. Catalyzes the reversible interconversion of serine and glycine with tetrahydrofolate (THF) serving as the one-carbon carrier. This reaction serves as the major source of one-carbon groups required for the biosynthesis of purines, thymidylate, methionine, and other important biomolecules. Also exhibits THF-independent aldolase activity toward beta-hydroxyamino acids, producing glycine and aldehydes, via a retro-aldol mechanism. The chain is Serine hydroxymethyltransferase from Buchnera aphidicola subsp. Schizaphis graminum (strain Sg).